A 177-amino-acid polypeptide reads, in one-letter code: ATP synthase subunit delta (177 aa).

The protein belongs to the ATPase delta chain family. In terms of assembly, F-type ATPases have 2 components, F(1) - the catalytic core - and F(0) - the membrane proton channel. F(1) has five subunits: alpha(3), beta(3), gamma(1), delta(1), epsilon(1). F(0) has three main subunits: a(1), b(2) and c(10-14). The alpha and beta chains form an alternating ring which encloses part of the gamma chain. F(1) is attached to F(0) by a central stalk formed by the gamma and epsilon chains, while a peripheral stalk is formed by the delta and b chains.

It localises to the cell inner membrane. F(1)F(0) ATP synthase produces ATP from ADP in the presence of a proton or sodium gradient. F-type ATPases consist of two structural domains, F(1) containing the extramembraneous catalytic core and F(0) containing the membrane proton channel, linked together by a central stalk and a peripheral stalk. During catalysis, ATP synthesis in the catalytic domain of F(1) is coupled via a rotary mechanism of the central stalk subunits to proton translocation. Its function is as follows. This protein is part of the stalk that links CF(0) to CF(1). It either transmits conformational changes from CF(0) to CF(1) or is implicated in proton conduction. The sequence is that of ATP synthase subunit delta from Proteus mirabilis (strain HI4320).